We begin with the raw amino-acid sequence, 181 residues long: UPF0200 protein Ta0179 (181 aa).

6-13 (GMPGAGKD) contributes to the ATP binding site.

It belongs to the UPF0200 family.

The chain is UPF0200 protein Ta0179 from Thermoplasma acidophilum (strain ATCC 25905 / DSM 1728 / JCM 9062 / NBRC 15155 / AMRC-C165).